A 172-amino-acid polypeptide reads, in one-letter code: Adenine phosphoribosyltransferase (172 aa).

The protein belongs to the purine/pyrimidine phosphoribosyltransferase family. In terms of assembly, homodimer.

Its subcellular location is the cytoplasm. It carries out the reaction AMP + diphosphate = 5-phospho-alpha-D-ribose 1-diphosphate + adenine. Its pathway is purine metabolism; AMP biosynthesis via salvage pathway; AMP from adenine: step 1/1. Catalyzes a salvage reaction resulting in the formation of AMP, that is energically less costly than de novo synthesis. This Latilactobacillus sakei subsp. sakei (strain 23K) (Lactobacillus sakei subsp. sakei) protein is Adenine phosphoribosyltransferase.